The chain runs to 226 residues: Protein YOP1 homolog (226 aa).

A disordered region spans residues 1 to 25 (MRMSKLYKNKEKENEKPSNEPPIKQ). Residues 1–72 (MRMSKLYKNK…IEFGYKLGIK (72 aa)) are Cytoplasmic-facing. The span at 8-18 (KNKEKENEKPS) shows a compositional bias: basic and acidic residues. A helical transmembrane segment spans residues 73 to 92 (PSYIVVFGGSALFISLVLGW). Residues 93–94 (GA) lie on the Lumenal side of the membrane. Residues 95–113 (ALICNLVGFAYPAYQSFKA) traverse the membrane as a helical segment. Residues 114 to 123 (VESQGHAETK) are Cytoplasmic-facing. A helical membrane pass occupies residues 124-140 (LWLTYWVVFSLFFFIEY). Over 141 to 143 (LID) the chain is Lumenal. The chain crosses the membrane as a helical span at residues 144-162 (IILFWIPFYYVIKLLFLLY). At 163-226 (LYMPQVRGAE…VQEGVRRRNV (64 aa)) the chain is on the cytoplasmic side.

Belongs to the DP1 family. May form oligomers.

The protein resides in the endoplasmic reticulum membrane. In terms of biological role, required to generate and maintain the structure of the tubular endoplasmic reticulum network and the digestive (food) vacuole. Induces high curvature in membranes and causes membrane tubule formation. This is Protein YOP1 homolog from Plasmodium berghei (strain Anka).